The following is a 143-amino-acid chain: Phosphoprotein 32 (143 aa).

Over residues 1 to 14 (MESSNINALQQPSS) the composition is skewed to polar residues. The interval 1 to 32 (MESSNINALQQPSSIAHHPSKQCASSLNETVK) is disordered.

Belongs to the varicellovirus ORF32 protein family. Post-translationally, phosphorylated by ORF47 protein.

This is Phosphoprotein 32 from Homo sapiens (Human).